A 358-amino-acid polypeptide reads, in one-letter code: Phosphoserine aminotransferase (358 aa).

Residue Arg41 participates in L-glutamate binding. Residues 75–76, Trp100, Thr148, Asp167, and Gln190 contribute to the pyridoxal 5'-phosphate site; that span reads AS. Lys191 is subject to N6-(pyridoxal phosphate)lysine. 233–234 provides a ligand contact to pyridoxal 5'-phosphate; that stretch reads NT.

The protein belongs to the class-V pyridoxal-phosphate-dependent aminotransferase family. SerC subfamily. As to quaternary structure, homodimer. Requires pyridoxal 5'-phosphate as cofactor.

It localises to the cytoplasm. It carries out the reaction O-phospho-L-serine + 2-oxoglutarate = 3-phosphooxypyruvate + L-glutamate. The enzyme catalyses 4-(phosphooxy)-L-threonine + 2-oxoglutarate = (R)-3-hydroxy-2-oxo-4-phosphooxybutanoate + L-glutamate. It functions in the pathway amino-acid biosynthesis; L-serine biosynthesis; L-serine from 3-phospho-D-glycerate: step 2/3. The protein operates within cofactor biosynthesis; pyridoxine 5'-phosphate biosynthesis; pyridoxine 5'-phosphate from D-erythrose 4-phosphate: step 3/5. Catalyzes the reversible conversion of 3-phosphohydroxypyruvate to phosphoserine and of 3-hydroxy-2-oxo-4-phosphonooxybutanoate to phosphohydroxythreonine. This is Phosphoserine aminotransferase from Campylobacter jejuni subsp. doylei (strain ATCC BAA-1458 / RM4099 / 269.97).